A 295-amino-acid chain; its full sequence is MLCTSPVNCLDSVCCTSINISSLVRRAALTHNDNHFNYEKTHNFKVHTFRGPHWCEYCANFMWGLIAQGVRCSDCGLNVHKQCSKHVPNDCQPDLKRIKKVYCCDLTTLVKAHNTQRPMVVDICIREIEARGLKSEGLYRVSGFTEHIEDVKMAFDRDGEKADISANIYPDINIITGALKLYFRDLPIPIITYDTYTKFIEAAKISNADERLEAVHEVLMLLPPAHYETLRYLMIHLKKVTMNEKDNLMNAENLGIVFGPTLMRPPEDSTLTTLHDMRYQKLIVQILIENEDVLF.

The Phorbol-ester/DAG-type zinc finger occupies 41–91 (THNFKVHTFRGPHWCEYCANFMWGLIAQGVRCSDCGLNVHKQCSKHVPNDC). In terms of domain architecture, Rho-GAP spans 104 to 295 (CDLTTLVKAH…ILIENEDVLF (192 aa)).

As to expression, found in cerebellum and testis.

The protein resides in the membrane. Its activity is regulated as follows. In the inactive state, the N terminus protrudes into the active site of the Rho-GAP domain, sterically blocking Rac binding. Phospholipid binding to the Phorbol-ester/DAG-type zinc-finger/C1 domain triggers the cooperative dissociation of these interactions, allowing the N-terminus to move out of the active site and thereby activating the enzyme. Functionally, GTPase-activating protein for p21-rac. This Rattus norvegicus (Rat) protein is Beta-chimaerin (Chn2).